Here is a 193-residue protein sequence, read N- to C-terminus: ER membrane protein complex subunit 4 (193 aa).

2 helical membrane-spanning segments follow: residues isoleucine 91–leucine 111 and leucine 137–tyrosine 157.

This sequence belongs to the EMC4 family.

It is found in the endoplasmic reticulum membrane. In Schizosaccharomyces pombe (strain 972 / ATCC 24843) (Fission yeast), this protein is ER membrane protein complex subunit 4.